The sequence spans 56 residues: U-megalopygitoxin(2)-Mo9 (56 aa).

An N-terminal signal peptide occupies residues 1-25 (MKFIVLLLIVTSVLMMFAVTTEASP). Gln-26 is modified (pyrrolidone carboxylic acid). At Thr-55 the chain carries Threonine amide.

It belongs to the caterpillar 2 family. In terms of processing, contains 2 disulfide bonds. As to expression, expressed by the venom apparatus.

It localises to the secreted. In terms of biological role, probable toxin. The protein is U-megalopygitoxin(2)-Mo9 of Megalopyge opercularis (Southern flannel moth).